The primary structure comprises 382 residues: Homeobox protein SHOOT MERISTEMLESS (382 aa).

The tract at residues 26–59 is disordered; it reads MMMMMPPIMTSHQHHGHDHQHQQQEHDGYAYQSH. The span at 44–53 shows a compositional bias: basic and acidic residues; that stretch reads HQHQQQEHDG. In terms of domain architecture, ELK spans 262-282; the sequence is ELKGQLLRKYSGYLGSLKQEF. The segment at residues 283–346 is a DNA-binding region (homeobox; TALE-type); the sequence is MKKRKKGKLP…NQRKRHWKPS (64 aa).

Belongs to the TALE/KNOX homeobox family. In terms of assembly, forms homodimers. May form heterodimeric complexes with TALE/BELL proteins BEL1, BLH2, BLH3, BLH8/PNF, BLH9/PNY and ATH1. Interacts with CCT8. Binds to MBP2C; this interaction reduces RNA binding capacity. Interacts with FTIP3 and FTIP4. Expressed in all four types of shoot apical meristems (SAM) i.e. in vegetative, axillary, inflorescence and floral.

The protein localises to the nucleus. Its subcellular location is the cell junction. It is found in the plasmodesma. The protein resides in the cytoplasm. It localises to the endosome. The protein localises to the cell membrane. Functionally, required for shoot apical meristem (SAM) formation during embryogenesis. Negatively regulates ASYMMETRIC LEAVES1 (AS1) and ASYMMETRIC LEAVES2 (AS2 or LBD6). Probably binds to the DNA sequence 5'-TGAC-3'. Binds to RNA. The protein is Homeobox protein SHOOT MERISTEMLESS of Arabidopsis thaliana (Mouse-ear cress).